Reading from the N-terminus, the 469-residue chain is SVGFKAGVKEYKLTYYTPEYETKETDILAAFRVTPQPGVPPEERGAAVAAESSTGTWTTVWTDGLTSLDRYKGRCYHIEPVPGEEDQYIAYVAYPLDLFEEGSVTNMFTSIVGNVFGFKALRAXRLEDLRIPVAYTKTFQGPPHGIQVERDKLNKYGRPLLGCTIKPKLGLSAKNYGRAVYECLRGGLDFTKDDENVNSQPFMRWRDRFLFCAEAIYKAQAETGEIKGHYLNATAGTCEEMIKRAVFARELGAPIVMHDYLTGGFTANTSXAHYCRDNGLLLHIHRAMHAVIDRQKNHGMHFRVLAKALRLSGGDHIHAGTVVGKLEGERDITLGFVDLLRDDFIEKDRSRGIYFTQDWVSLPGVLPVASGGIHVWHMPALTEIFGDDSVLQFGGGTLGHPWGNAPGAVANRVALEAXVKARNEGRDLAAEGNEIIREASKWSPELAAACEVWKEIRFNFKAVDTLDPS.

K5 is modified (N6,N6,N6-trimethyllysine). Substrate-binding residues include N114 and T164. K166 functions as the Proton acceptor in the catalytic mechanism. K168 is a binding site for substrate. Residues K192, D194, and E195 each coordinate Mg(2+). K192 carries the N6-carboxylysine modification. H285 functions as the Proton acceptor in the catalytic mechanism. Substrate is bound by residues R286, H318, and S370.

Belongs to the RuBisCO large chain family. Type I subfamily. In terms of assembly, heterohexadecamer of 8 large chains and 8 small chains; disulfide-linked. The disulfide link is formed within the large subunit homodimers. It depends on Mg(2+) as a cofactor. Post-translationally, the disulfide bond which can form in the large chain dimeric partners within the hexadecamer appears to be associated with oxidative stress and protein turnover.

The protein resides in the plastid. Its subcellular location is the chloroplast. The catalysed reaction is 2 (2R)-3-phosphoglycerate + 2 H(+) = D-ribulose 1,5-bisphosphate + CO2 + H2O. It carries out the reaction D-ribulose 1,5-bisphosphate + O2 = 2-phosphoglycolate + (2R)-3-phosphoglycerate + 2 H(+). RuBisCO catalyzes two reactions: the carboxylation of D-ribulose 1,5-bisphosphate, the primary event in carbon dioxide fixation, as well as the oxidative fragmentation of the pentose substrate in the photorespiration process. Both reactions occur simultaneously and in competition at the same active site. In Cephalanthus occidentalis (Common buttonbush), this protein is Ribulose bisphosphate carboxylase large chain.